A 428-amino-acid polypeptide reads, in one-letter code: uncharacterized protein (428 aa).

A run of 12 helical transmembrane segments spans residues 14 to 34, 55 to 75, 84 to 104, 107 to 127, 149 to 169, 182 to 202, 238 to 258, 272 to 292, 302 to 322, 324 to 344, 361 to 381, and 392 to 412; these read LYDW…FPLF, YTIA…GTIA, FFGF…FIPS, WLLL…ANVF, FGLG…VILL, ASQL…IPMI, LFLF…IITM, SLLI…IIYG, TMLY…YFME, TLDF…IQAL, FFGF…LLIA, and TAVF…AFVP.

Belongs to the major facilitator superfamily.

The protein localises to the cell membrane. This is an uncharacterized protein from Bacillus subtilis (strain 168).